The following is a 260-amino-acid chain: Proteasome subunit alpha 1 (260 aa).

The tract at residues 237 to 260 (AEADLLDTGEDADDEAEDEDATEE) is disordered. Acidic residues predominate over residues 240 to 260 (DLLDTGEDADDEAEDEDATEE).

This sequence belongs to the peptidase T1A family. The 20S proteasome core is composed of 14 alpha and 14 beta subunits that assemble into four stacked heptameric rings, resulting in a barrel-shaped structure. The two inner rings, each composed of seven catalytic beta subunits, are sandwiched by two outer rings, each composed of seven alpha subunits. The catalytic chamber with the active sites is on the inside of the barrel. Has a gated structure, the ends of the cylinder being occluded by the N-termini of the alpha-subunits. Is capped at one or both ends by the proteasome regulatory ATPase, PAN.

Its subcellular location is the cytoplasm. The formation of the proteasomal ATPase PAN-20S proteasome complex, via the docking of the C-termini of PAN into the intersubunit pockets in the alpha-rings, triggers opening of the gate for substrate entry. Interconversion between the open-gate and close-gate conformations leads to a dynamic regulation of the 20S proteasome proteolysis activity. Functionally, component of the proteasome core, a large protease complex with broad specificity involved in protein degradation. This is Proteasome subunit alpha 1 from Haloarcula marismortui (strain ATCC 43049 / DSM 3752 / JCM 8966 / VKM B-1809) (Halobacterium marismortui).